The following is a 694-amino-acid chain: Methionine--tRNA ligase (694 aa).

The short motif at 12-22 (PYANGPLHLGH) is the 'HIGH' region element. C143, C146, C156, and C159 together coordinate Zn(2+). The 'KMSKS' region motif lies at 330 to 334 (KMSKS). K333 contributes to the ATP binding site. The segment covering 550-575 (LAAPAAPATTSKAAPAKPDTKPAAAA) has biased composition (low complexity). The tract at residues 550 to 580 (LAAPAAPATTSKAAPAKPDTKPAAAANPQSP) is disordered. Residues 591 to 694 (DFAKLDLRIG…SGAQPGMPVR (104 aa)) enclose the tRNA-binding domain.

This sequence belongs to the class-I aminoacyl-tRNA synthetase family. MetG type 1 subfamily. In terms of assembly, homodimer. Zn(2+) is required as a cofactor.

It localises to the cytoplasm. It catalyses the reaction tRNA(Met) + L-methionine + ATP = L-methionyl-tRNA(Met) + AMP + diphosphate. Is required not only for elongation of protein synthesis but also for the initiation of all mRNA translation through initiator tRNA(fMet) aminoacylation. In Xanthomonas oryzae pv. oryzae (strain MAFF 311018), this protein is Methionine--tRNA ligase.